The sequence spans 477 residues: Xylose isomerase (477 aa).

H142 is a catalytic residue. Mn(2+)-binding residues include E273, E309, H312, D337, D348, D350, and D380.

This sequence belongs to the xylose isomerase family. Mn(2+) serves as cofactor.

The catalysed reaction is alpha-D-xylose = alpha-D-xylulofuranose. The sequence is that of Xylose isomerase (XYLA) from Arabidopsis thaliana (Mouse-ear cress).